A 1098-amino-acid polypeptide reads, in one-letter code: MVRAQETVYDLITKCSVRRVPPKQFVNFYNEFFNERYDSVLENGNPAGESRPTAPVYEEVAQDLVRILNDSRVNLVADYVLEIVLINLNVDLLRLFLPKLHHVRNVMLLVHLFSRATAFISGLDNKLLAEQISDTVYTDVTPAVLSFNMQAIDDQLVIVLAKFLHAVLRLPEGQQKMGSVPTKQKAATLLQRLSTIDRLLYKRFIADLDGKLRLSGAPADMSFPLPPSNMPSPSVTSPKYETSSVGVMKRSTSMSNEAKYQDIKLARYYKNLWLNNKIHYCTVSDPLFLEKYDSILELATGGGLSADRPVKAKIADLVETAFTCFAQFVSNKLYHQSNSNFSLLERKWTVFVTKQLPLIIKSSIPDKTDIVLRTLENIDDKVIKAIKSYNTEKEEVKNRTEDLFDDYPVNSLDIRHEFLKNLIMMGLQPPTVLNEYLREDQMVDLKSLVTSEHLIIDNSQGVRETILNVRNFITKSIESLEFENLFDDGNQLLVTNDHGIIQIAHNLETISPTKQLEIANILYDLLSAAIESLDHKTISKVLTILTLNVGHLLTNIFCLTGYEKFARAVIRFIDVIWESNKSKSNDMVSDDSEFENINSAMAYTLSLCFIIHVVDIYGVNVEALVENPSKSTVLRFLSKLGEIPEVFVAPEGDLESSKTLLQQWLRELFVKNLISDNLMKSADVKVMGFMIPFIFKQTLLNVEYGIISDISSFVNGFEYFLQPFLSVGLINIVFWLEKYLLALKTTESFPKINGALFDILGAIIAPKSIGSDAKAIHSVVLKLKCVGLLKELKSFQVPSESNYGIYSSQTRQDPRLEALISKLELIAQSSALYDVDPRIISAVNNNYSQKHISYNKVVLTSDIPINKIMTNQINSFWNLHSSTYYNFDYLLELIDLVTPFKFVQDVFQTLKYKVTAYGVPGSATKPSSAALDQVLGYVFYFMVLRDIKCPEEKSLLLEYLDSGRFPSSISATVLTSDPTTISGMPPVSMPYDVKSEQDAMEGVDEDFDMLFGESFSGLPDDVQKSADMKPDTGIKEDDSEKSSYVSAARLTESFGVIFSKMKKDKLEAYQAGQISEERYQCFMGLYDKYVQTLRHSVI.

The interval 1019 to 1041 (PDDVQKSADMKPDTGIKEDDSEK) is disordered. Residues 1021 to 1041 (DVQKSADMKPDTGIKEDDSEK) show a composition bias toward basic and acidic residues.

It belongs to the Mediator complex subunit 5 family. As to quaternary structure, component of the Mediator complex.

It is found in the nucleus. Component of the Mediator complex, a coactivator involved in the regulated transcription of nearly all RNA polymerase II-dependent genes. Mediator functions as a bridge to convey information from gene-specific regulatory proteins to the basal RNA polymerase II transcription machinery. Mediator is recruited to promoters by direct interactions with regulatory proteins and serves as a scaffold for the assembly of a functional preinitiation complex with RNA polymerase II and the general transcription factors. The protein is Mediator of RNA polymerase II transcription subunit 5 (NUT1) of Eremothecium gossypii (strain ATCC 10895 / CBS 109.51 / FGSC 9923 / NRRL Y-1056) (Yeast).